We begin with the raw amino-acid sequence, 117 residues long: Ubiquitin-like protein pmt3/smt3 (117 aa).

Residues 1 to 37 (MSESPSANISDADKSAITPTTGDTSQQDVKPSTEHIN) form a disordered region. Over residues 17–30 (ITPTTGDTSQQDVK) the composition is skewed to polar residues. The region spanning 35-115 (HINLKVVGQD…LEQLGGCTHL (81 aa)) is the Ubiquitin-like domain. Residue G111 forms a Glycyl lysine isopeptide (Gly-Lys) (interchain with K-? in acceptor proteins) linkage. Residues 112-117 (CTHLCL) constitute a propeptide that is removed on maturation.

This sequence belongs to the ubiquitin family. SUMO subfamily. As to quaternary structure, interacts with rfp1.

It is found in the nucleus. Functionally, required for chromosome segregation where it may be involved in microtubule assembly. Loss of smt3 leads to an increase in telomere length. The chain is Ubiquitin-like protein pmt3/smt3 (pmt3) from Schizosaccharomyces pombe (strain 972 / ATCC 24843) (Fission yeast).